The chain runs to 572 residues: Proline--tRNA ligase (572 aa).

Belongs to the class-II aminoacyl-tRNA synthetase family. ProS type 1 subfamily. Homodimer.

The protein localises to the cytoplasm. The enzyme catalyses tRNA(Pro) + L-proline + ATP = L-prolyl-tRNA(Pro) + AMP + diphosphate. Catalyzes the attachment of proline to tRNA(Pro) in a two-step reaction: proline is first activated by ATP to form Pro-AMP and then transferred to the acceptor end of tRNA(Pro). As ProRS can inadvertently accommodate and process non-cognate amino acids such as alanine and cysteine, to avoid such errors it has two additional distinct editing activities against alanine. One activity is designated as 'pretransfer' editing and involves the tRNA(Pro)-independent hydrolysis of activated Ala-AMP. The other activity is designated 'posttransfer' editing and involves deacylation of mischarged Ala-tRNA(Pro). The misacylated Cys-tRNA(Pro) is not edited by ProRS. The protein is Proline--tRNA ligase of Haemophilus influenzae (strain 86-028NP).